The sequence spans 502 residues: Alpha-globin transcription factor CP2 (502 aa).

Residues 63 to 300 (EILPFQYVLC…SPGFNSSHSS (238 aa)) enclose the Grh/CP2 DB domain. Positions 133–386 (EHQQLEGWRW…LFNALKGRMV (254 aa)) are DNA-binding. The segment covering 241–265 (KGADRKQKIDREKMEKRTPHEKEKY) has biased composition (basic and acidic residues). Disordered regions lie at residues 241-268 (KGAD…YQPS) and 294-326 (FNSS…NLLP). A Phosphoserine modification is found at Ser353.

It belongs to the grh/CP2 family. CP2 subfamily. As to quaternary structure, binds to DNA as a dimer. Interacts with UBP1 and PIAS1, and is probably part of a complex containing TFCP2, UBP1 and PIAS1. Component of the SSP (stage selector protein) complex, which appears to be a heteromer of TFCP2 and 2 copies of NFE4.

Its subcellular location is the nucleus. Binds a variety of cellular promoters including fibrinogen, alpha-globin promoters. Activation of the alpha-globin promoter in erythroid cells is via synergistic interaction with UBP1. Functions as part of the SSP (stage selector protein) complex. Facilitates the interaction of the gamma-globin genes with enhancer elements contained in the locus control region in fetal erythroid cells. Interacts by binding to the stage selector element (SSE) in the proximal gamma-globin promoter. The polypeptide is Alpha-globin transcription factor CP2 (Tfcp2) (Mus musculus (Mouse)).